Consider the following 410-residue polypeptide: Phytoene synthase 1, chloroplastic (410 aa).

The transit peptide at 1-62 (MAIILVRAAS…EAGRPSPAVY (62 aa)) directs the protein to the chloroplast.

The protein belongs to the phytoene/squalene synthase family. Monomer. As to expression, expressed in embryos, endosperm and seedling leaves. Expressed in leaves and endosperm.

It localises to the plastid. It is found in the chloroplast stroma. The enzyme catalyses 2 (2E,6E,10E)-geranylgeranyl diphosphate = 15-cis-phytoene + 2 diphosphate. It functions in the pathway carotenoid biosynthesis; phytoene biosynthesis; all-trans-phytoene from geranylgeranyl diphosphate: step 1/1. Catalyzes the conversion of geranylgeranyl diphosphate to phytoene. Mediates the first committed step in carotenoid biosynthesis. The polypeptide is Phytoene synthase 1, chloroplastic (Zea mays (Maize)).